The sequence spans 301 residues: Cytochrome c biogenesis protein CcsA (301 aa).

8 helical membrane passes run 13–33, 39–59, 73–93, 97–117, 146–166, 209–229, 236–256, and 270–290; these read NNITFLTLLISLISYWLGLIF, VFYIGYGSTILACITITIILG, LYESLMFLTWGLLFSAIYLEY, LYLIGAIVSPISLFIVSFSTL, MLSYSTLIIGSLLAILYLVLI, TIGFGFPLLTIGIIAGAVWAN, WSWDPKETWALITWLVFAAYL, and AYLAALGFVVVWICYLGVNFL.

It belongs to the CcmF/CycK/Ccl1/NrfE/CcsA family. In terms of assembly, may interact with Ccs1.

The protein localises to the plastid. Its subcellular location is the chloroplast thylakoid membrane. Required during biogenesis of c-type cytochromes (cytochrome c6 and cytochrome f) at the step of heme attachment. This is Cytochrome c biogenesis protein CcsA from Guillardia theta (Cryptophyte).